The chain runs to 300 residues: Regulatory protein NocR (300 aa).

An HTH lysR-type domain is found at 1-59 (MIQSRQLEAFRPVMLTGGMTSAANLVRITQPAISRLIRDLEEEIGISLFERTGNRLRPT). A DNA-binding region (H-T-H motif) is located at residues 19-38 (MTSAANLVRITQPAISRLIR).

Belongs to the LysR transcriptional regulatory family.

Its function is as follows. Positive regulatory protein for the noc operon involved in nopaline catabolism and uptake. This Agrobacterium tumefaciens (strain T37) protein is Regulatory protein NocR (nocR).